A 115-amino-acid polypeptide reads, in one-letter code: Large ribosomal subunit protein bL19 (115 aa).

This sequence belongs to the bacterial ribosomal protein bL19 family.

Its function is as follows. This protein is located at the 30S-50S ribosomal subunit interface and may play a role in the structure and function of the aminoacyl-tRNA binding site. The polypeptide is Large ribosomal subunit protein bL19 (Streptococcus pyogenes serotype M49 (strain NZ131)).